Here is a 1434-residue protein sequence, read N- to C-terminus: DNA-directed RNA polymerase subunit beta' (1434 aa).

The Zn(2+) site is built by cysteine 70, cysteine 72, cysteine 85, and cysteine 88. Residues aspartate 460, aspartate 462, and aspartate 464 each coordinate Mg(2+). The Zn(2+) site is built by cysteine 840, cysteine 914, cysteine 921, and cysteine 924.

Belongs to the RNA polymerase beta' chain family. As to quaternary structure, the RNAP catalytic core consists of 2 alpha, 1 beta, 1 beta' and 1 omega subunit. When a sigma factor is associated with the core the holoenzyme is formed, which can initiate transcription. The cofactor is Mg(2+). Zn(2+) serves as cofactor.

It catalyses the reaction RNA(n) + a ribonucleoside 5'-triphosphate = RNA(n+1) + diphosphate. Its function is as follows. DNA-dependent RNA polymerase catalyzes the transcription of DNA into RNA using the four ribonucleoside triphosphates as substrates. In Tolumonas auensis (strain DSM 9187 / NBRC 110442 / TA 4), this protein is DNA-directed RNA polymerase subunit beta'.